We begin with the raw amino-acid sequence, 280 residues long: Cis-2,3-dihydrobiphenyl-2,3-diol dehydrogenase (280 aa).

Residue 9 to 33 (LVTGGCAGLGRAIVDRFVCEGARVA) participates in NAD(+) binding. Ser142 provides a ligand contact to substrate. The active-site Proton acceptor is Tyr155.

This sequence belongs to the short-chain dehydrogenases/reductases (SDR) family.

The enzyme catalyses (2R,3S)-3-phenylcyclohexa-3,5-diene-1,2-diol + NAD(+) = biphenyl-2,3-diol + NADH + H(+). It functions in the pathway xenobiotic degradation; biphenyl degradation; 2-hydroxy-2,4-pentadienoate and benzoate from biphenyl: step 2/4. This Rhodococcus globerulus protein is Cis-2,3-dihydrobiphenyl-2,3-diol dehydrogenase (bphB).